We begin with the raw amino-acid sequence, 156 residues long: Keratin, high-sulfur matrix protein, B2B (156 aa).

The residue at position 1 (Ala-1) is an N-acetylalanine. 4 consecutive repeats follow at residues Pro-26–Gln-35, Pro-36–Gln-45, Pro-46–Gln-55, and Pro-56–Glu-65.

The keratin products of mammalian epidermal derivatives such as wool and hair consist of microfibrils embedded in a rigid matrix of other proteins. The matrix proteins include the high-sulfur and high-tyrosine keratins, having molecular weights of 6-20 kDa, whereas the microfibrils contain the larger, low-sulfur keratins (40-56 kDa). The sequence is that of Keratin, high-sulfur matrix protein, B2B from Ovis aries (Sheep).